Consider the following 365-residue polypeptide: tRNA-specific 2-thiouridylase MnmA (365 aa).

ATP-binding positions include 6-13 and Leu32; that span reads AMSGGVDS. The active-site Nucleophile is Cys101. An intrachain disulfide couples Cys101 to Cys199. Residue Gly125 coordinates ATP. Positions 149–151 are interaction with tRNA; it reads KDQ. Cys199 acts as the Cysteine persulfide intermediate in catalysis.

This sequence belongs to the MnmA/TRMU family.

It is found in the cytoplasm. The catalysed reaction is S-sulfanyl-L-cysteinyl-[protein] + uridine(34) in tRNA + AH2 + ATP = 2-thiouridine(34) in tRNA + L-cysteinyl-[protein] + A + AMP + diphosphate + H(+). In terms of biological role, catalyzes the 2-thiolation of uridine at the wobble position (U34) of tRNA, leading to the formation of s(2)U34. The polypeptide is tRNA-specific 2-thiouridylase MnmA (Corynebacterium efficiens (strain DSM 44549 / YS-314 / AJ 12310 / JCM 11189 / NBRC 100395)).